Consider the following 647-residue polypeptide: Macrolide export ATP-binding/permease protein MacB (647 aa).

An ABC transporter domain is found at Leu6 to Asn244. Gly42 to Ser49 serves as a coordination point for ATP. The next 4 membrane-spanning stretches (helical) occupy residues Phe273 to Gly293, Leu522 to Ile542, Leu577 to Phe597, and Ser612 to Ala632.

It belongs to the ABC transporter superfamily. Macrolide exporter (TC 3.A.1.122) family. Homodimer. Part of the tripartite efflux system MacAB-TolC, which is composed of an inner membrane transporter, MacB, a periplasmic membrane fusion protein, MacA, and an outer membrane component, TolC. The complex forms a large protein conduit and can translocate molecules across both the inner and outer membranes. Interacts with MacA.

The protein resides in the cell inner membrane. Its function is as follows. Part of the tripartite efflux system MacAB-TolC. MacB is a non-canonical ABC transporter that contains transmembrane domains (TMD), which form a pore in the inner membrane, and an ATP-binding domain (NBD), which is responsible for energy generation. Confers resistance against macrolides. In Shewanella sp. (strain W3-18-1), this protein is Macrolide export ATP-binding/permease protein MacB.